The sequence spans 104 residues: Nucleoid-associated protein DICTH_1981 (104 aa).

The tract at residues 85–104 (KSAEKMGSLADGLPLPPGLF) is disordered.

The protein belongs to the YbaB/EbfC family. In terms of assembly, homodimer.

The protein resides in the cytoplasm. The protein localises to the nucleoid. Functionally, binds to DNA and alters its conformation. May be involved in regulation of gene expression, nucleoid organization and DNA protection. This chain is Nucleoid-associated protein DICTH_1981, found in Dictyoglomus thermophilum (strain ATCC 35947 / DSM 3960 / H-6-12).